We begin with the raw amino-acid sequence, 87 residues long: Phosphoribosyl-ATP pyrophosphatase (87 aa).

Belongs to the PRA-PH family.

The protein resides in the cytoplasm. It catalyses the reaction 1-(5-phospho-beta-D-ribosyl)-ATP + H2O = 1-(5-phospho-beta-D-ribosyl)-5'-AMP + diphosphate + H(+). It functions in the pathway amino-acid biosynthesis; L-histidine biosynthesis; L-histidine from 5-phospho-alpha-D-ribose 1-diphosphate: step 2/9. The protein is Phosphoribosyl-ATP pyrophosphatase of Bifidobacterium adolescentis (strain ATCC 15703 / DSM 20083 / NCTC 11814 / E194a).